Reading from the N-terminus, the 195-residue chain is ATP-dependent Clp protease proteolytic subunit (195 aa).

S98 serves as the catalytic Nucleophile. H123 is a catalytic residue.

The protein belongs to the peptidase S14 family. Fourteen ClpP subunits assemble into 2 heptameric rings which stack back to back to give a disk-like structure with a central cavity, resembling the structure of eukaryotic proteasomes.

It is found in the cytoplasm. The enzyme catalyses Hydrolysis of proteins to small peptides in the presence of ATP and magnesium. alpha-casein is the usual test substrate. In the absence of ATP, only oligopeptides shorter than five residues are hydrolyzed (such as succinyl-Leu-Tyr-|-NHMec, and Leu-Tyr-Leu-|-Tyr-Trp, in which cleavage of the -Tyr-|-Leu- and -Tyr-|-Trp bonds also occurs).. Functionally, cleaves peptides in various proteins in a process that requires ATP hydrolysis. Has a chymotrypsin-like activity. Plays a major role in the degradation of misfolded proteins. This Alkaliphilus oremlandii (strain OhILAs) (Clostridium oremlandii (strain OhILAs)) protein is ATP-dependent Clp protease proteolytic subunit.